Reading from the N-terminus, the 100-residue chain is Urease subunit gamma (100 aa).

The protein belongs to the urease gamma subunit family. Heterotrimer of UreA (gamma), UreB (beta) and UreC (alpha) subunits. Three heterotrimers associate to form the active enzyme.

The protein resides in the cytoplasm. It carries out the reaction urea + 2 H2O + H(+) = hydrogencarbonate + 2 NH4(+). It functions in the pathway nitrogen metabolism; urea degradation; CO(2) and NH(3) from urea (urease route): step 1/1. The sequence is that of Urease subunit gamma from Rhizobium leguminosarum bv. viciae.